Here is a 228-residue protein sequence, read N- to C-terminus: Urease accessory protein UreF (228 aa).

This sequence belongs to the UreF family. As to quaternary structure, ureD, UreF and UreG form a complex that acts as a GTP-hydrolysis-dependent molecular chaperone, activating the urease apoprotein by helping to assemble the nickel containing metallocenter of UreC. The UreE protein probably delivers the nickel.

The protein resides in the cytoplasm. Required for maturation of urease via the functional incorporation of the urease nickel metallocenter. The polypeptide is Urease accessory protein UreF (Prochlorococcus marinus (strain MIT 9312)).